Here is a 331-residue protein sequence, read N- to C-terminus: Peroxidase 49 (331 aa).

Positions 1-22 are cleaved as a signal peptide; that stretch reads MARLTSFLLLLSLICFVPLCLC. 4 disulfide bridges follow: C39-C119, C72-C77, C125-C326, and C204-C236. H70 (proton acceptor) is an active-site residue. Ca(2+)-binding residues include D71, V74, G76, D78, and S80. P167 serves as a coordination point for substrate. Residue N170 is glycosylated (N-linked (GlcNAc...) asparagine). H197 is a heme b binding site. T198 is a binding site for Ca(2+). A glycan (N-linked (GlcNAc...) asparagine) is linked at N213. Ca(2+) contacts are provided by D249, S252, and D257.

The protein belongs to the peroxidase family. Classical plant (class III) peroxidase subfamily. It depends on heme b as a cofactor. The cofactor is Ca(2+).

The protein resides in the secreted. It catalyses the reaction 2 a phenolic donor + H2O2 = 2 a phenolic radical donor + 2 H2O. Its function is as follows. Removal of H(2)O(2), oxidation of toxic reductants, biosynthesis and degradation of lignin, suberization, auxin catabolism, response to environmental stresses such as wounding, pathogen attack and oxidative stress. These functions might be dependent on each isozyme/isoform in each plant tissue. The polypeptide is Peroxidase 49 (PER49) (Arabidopsis thaliana (Mouse-ear cress)).